Reading from the N-terminus, the 125-residue chain is Large ribosomal subunit protein bL20 (125 aa).

This sequence belongs to the bacterial ribosomal protein bL20 family.

Its function is as follows. Binds directly to 23S ribosomal RNA and is necessary for the in vitro assembly process of the 50S ribosomal subunit. It is not involved in the protein synthesizing functions of that subunit. This Methylobacterium nodulans (strain LMG 21967 / CNCM I-2342 / ORS 2060) protein is Large ribosomal subunit protein bL20.